The following is a 204-amino-acid chain: Elongation factor Ts (204 aa).

Residues 80-83 (TDFV) are involved in Mg(2+) ion dislocation from EF-Tu.

The protein belongs to the EF-Ts family.

The protein resides in the cytoplasm. Functionally, associates with the EF-Tu.GDP complex and induces the exchange of GDP to GTP. It remains bound to the aminoacyl-tRNA.EF-Tu.GTP complex up to the GTP hydrolysis stage on the ribosome. The chain is Elongation factor Ts from Caldicellulosiruptor saccharolyticus (strain ATCC 43494 / DSM 8903 / Tp8T 6331).